Consider the following 72-residue polypeptide: uncharacterized protein (72 aa).

This is an uncharacterized protein from Dictyostelium discoideum (Social amoeba).